The following is a 302-amino-acid chain: Sulfate adenylyltransferase subunit 2 (302 aa).

Belongs to the PAPS reductase family. CysD subfamily. In terms of assembly, heterodimer composed of CysD, the smaller subunit, and CysN.

It carries out the reaction sulfate + ATP + H(+) = adenosine 5'-phosphosulfate + diphosphate. It functions in the pathway sulfur metabolism; hydrogen sulfide biosynthesis; sulfite from sulfate: step 1/3. In terms of biological role, with CysN forms the ATP sulfurylase (ATPS) that catalyzes the adenylation of sulfate producing adenosine 5'-phosphosulfate (APS) and diphosphate, the first enzymatic step in sulfur assimilation pathway. APS synthesis involves the formation of a high-energy phosphoric-sulfuric acid anhydride bond driven by GTP hydrolysis by CysN coupled to ATP hydrolysis by CysD. This chain is Sulfate adenylyltransferase subunit 2, found in Shigella boydii serotype 4 (strain Sb227).